The chain runs to 402 residues: 1-deoxy-D-xylulose 5-phosphate reductoisomerase (402 aa).

Thr-10, Gly-11, Ser-12, Ile-13, Gly-36, Arg-37, Asn-38, and Asn-124 together coordinate NADPH. 1-deoxy-D-xylulose 5-phosphate is bound at residue Lys-125. Position 126 (Glu-126) interacts with NADPH. Asp-150 is a Mn(2+) binding site. Positions 151, 152, 186, and 209 each coordinate 1-deoxy-D-xylulose 5-phosphate. A Mn(2+)-binding site is contributed by Glu-152. Gly-215 provides a ligand contact to NADPH. 1-deoxy-D-xylulose 5-phosphate is bound by residues Ser-222, Asn-227, Lys-228, and Glu-231. Glu-231 lines the Mn(2+) pocket.

The protein belongs to the DXR family. The cofactor is Mg(2+). Mn(2+) is required as a cofactor.

It carries out the reaction 2-C-methyl-D-erythritol 4-phosphate + NADP(+) = 1-deoxy-D-xylulose 5-phosphate + NADPH + H(+). It participates in isoprenoid biosynthesis; isopentenyl diphosphate biosynthesis via DXP pathway; isopentenyl diphosphate from 1-deoxy-D-xylulose 5-phosphate: step 1/6. With respect to regulation, inhibited by fosmidomycin. In terms of biological role, catalyzes the NADPH-dependent rearrangement and reduction of 1-deoxy-D-xylulose-5-phosphate (DXP) to 2-C-methyl-D-erythritol 4-phosphate (MEP). The chain is 1-deoxy-D-xylulose 5-phosphate reductoisomerase from Synechococcus sp. (strain ATCC 27144 / PCC 6301 / SAUG 1402/1) (Anacystis nidulans).